The chain runs to 58 residues: ADVPGNYPLDKDGNTYKCFLLGENEECLNVCKLHGVQYGYCYASKCWCEYLEDDKDSV.

The LCN-type CS-alpha/beta domain occupies 3–58 (VPGNYPLDKDGNTYKCFLLGENEECLNVCKLHGVQYGYCYASKCWCEYLEDDKDSV). 3 cysteine pairs are disulfide-bonded: cysteine 18/cysteine 41, cysteine 27/cysteine 46, and cysteine 31/cysteine 48.

In terms of tissue distribution, expressed by the venom gland.

It is found in the secreted. Beta toxins bind voltage-independently at site-4 of sodium channels (Nav) and shift the voltage of activation toward more negative potentials thereby affecting sodium channel activation and promoting spontaneous and repetitive firing. Does not produce effect when administered to blowfly and cabbage looper larvae. In mice, does not produce convulsions, tremors, increased ventilation nor death. This chain is Ikitoxin, found in Parabuthus transvaalicus (Transvaal thick-tailed scorpion).